The following is a 212-amino-acid chain: Large ribosomal subunit protein uL3 (212 aa).

Gln153 carries the N5-methylglutamine modification.

The protein belongs to the universal ribosomal protein uL3 family. As to quaternary structure, part of the 50S ribosomal subunit. Forms a cluster with proteins L14 and L19. In terms of processing, methylated by PrmB.

Its function is as follows. One of the primary rRNA binding proteins, it binds directly near the 3'-end of the 23S rRNA, where it nucleates assembly of the 50S subunit. The protein is Large ribosomal subunit protein uL3 of Shewanella loihica (strain ATCC BAA-1088 / PV-4).